Consider the following 137-residue polypeptide: Large ribosomal subunit protein uL16 (137 aa).

Positions 1 to 17 are enriched in basic residues; sequence MLQPKRTKFRKTHKGRN. Residues 1-24 are disordered; that stretch reads MLQPKRTKFRKTHKGRNRGLANTG.

Belongs to the universal ribosomal protein uL16 family. As to quaternary structure, part of the 50S ribosomal subunit.

Binds 23S rRNA and is also seen to make contacts with the A and possibly P site tRNAs. The polypeptide is Large ribosomal subunit protein uL16 (Aeromonas salmonicida (strain A449)).